The following is a 247-amino-acid chain: Ras-like protein family member 11B (247 aa).

The interval 28–245 (AGRRLVKIAV…ALSAKVRTVT (218 aa)) is small GTPase-like. GTP-binding positions include 39 to 46 (GASGVGKT), 86 to 93 (DTPGIQVH), and 151 to 154 (NKAD). The disordered stretch occupies residues 202–228 (PKQQPSSTPEKRRTSLIPRPKSPNMQD).

Belongs to the small GTPase superfamily. Ras family.

The catalysed reaction is GTP + H2O = GDP + phosphate + H(+). This chain is Ras-like protein family member 11B, found in Mus musculus (Mouse).